The sequence spans 299 residues: MLDNTRLRIAIQKSGRLSDDSRELLARCGIKINLHTQRLIAMAENMPIDILRVRDDDIPGLVMDGVVDLGIIGENVLEEELLNRRAQGEDPRYFTLRRLDFGGCRLSLATPVDEAWDGPAALDGKRIATSYPHLLKRYLDQKGVSFKSCLLNGSVEVAPRAGLADAICDLVSTGATLEANGLREVEVIYRSKACLIQRDGEMAQSKQELIDKLLTRIQGVIQARESKYIMMHAPSERLEEVIALLPGAERPTILPLAGEQQRVAMHMVSSETLFWETMEKLKALGASSILVLPIEKMME.

Belongs to the ATP phosphoribosyltransferase family. Long subfamily. Equilibrium between an active dimeric form, an inactive hexameric form and higher aggregates. Interconversion between the various forms is largely reversible and is influenced by the natural substrates and inhibitors of the enzyme. Mg(2+) is required as a cofactor.

It is found in the cytoplasm. The catalysed reaction is 1-(5-phospho-beta-D-ribosyl)-ATP + diphosphate = 5-phospho-alpha-D-ribose 1-diphosphate + ATP. Its pathway is amino-acid biosynthesis; L-histidine biosynthesis; L-histidine from 5-phospho-alpha-D-ribose 1-diphosphate: step 1/9. Its activity is regulated as follows. Feedback inhibited by histidine. In terms of biological role, catalyzes the condensation of ATP and 5-phosphoribose 1-diphosphate to form N'-(5'-phosphoribosyl)-ATP (PR-ATP). Has a crucial role in the pathway because the rate of histidine biosynthesis seems to be controlled primarily by regulation of HisG enzymatic activity. This is ATP phosphoribosyltransferase from Salmonella agona (strain SL483).